A 210-amino-acid chain; its full sequence is Large ribosomal subunit protein bL25 (210 aa).

This sequence belongs to the bacterial ribosomal protein bL25 family. CTC subfamily. As to quaternary structure, part of the 50S ribosomal subunit; part of the 5S rRNA/L5/L18/L25 subcomplex. Contacts the 5S rRNA. Binds to the 5S rRNA independently of L5 and L18.

Its function is as follows. This is one of the proteins that binds to the 5S RNA in the ribosome where it forms part of the central protuberance. In Saccharophagus degradans (strain 2-40 / ATCC 43961 / DSM 17024), this protein is Large ribosomal subunit protein bL25.